The sequence spans 149 residues: UPF0310 protein SSO2595 (149 aa).

This sequence belongs to the UPF0310 family.

The polypeptide is UPF0310 protein SSO2595 (Saccharolobus solfataricus (strain ATCC 35092 / DSM 1617 / JCM 11322 / P2) (Sulfolobus solfataricus)).